The chain runs to 206 residues: Isopentenyl-diphosphate Delta-isomerase (206 aa).

His44 and His51 together coordinate Mn(2+). Positions 49-183 (ALHLAFSCHV…PWAFSPWLVL (135 aa)) constitute a Nudix hydrolase domain. Cys86 is a catalytic residue. Cys86 contributes to the Mg(2+) binding site. His88 is a Mn(2+) binding site. Mg(2+) is bound at residue Glu106. The Mn(2+) site is built by Glu133 and Glu135. Residue Glu135 is part of the active site.

Belongs to the IPP isomerase type 1 family. It depends on Mg(2+) as a cofactor. Requires Mn(2+) as cofactor.

It is found in the cytoplasm. It catalyses the reaction isopentenyl diphosphate = dimethylallyl diphosphate. It participates in isoprenoid biosynthesis; dimethylallyl diphosphate biosynthesis; dimethylallyl diphosphate from isopentenyl diphosphate: step 1/1. In terms of biological role, catalyzes the 1,3-allylic rearrangement of the homoallylic substrate isopentenyl (IPP) to its highly electrophilic allylic isomer, dimethylallyl diphosphate (DMAPP). The chain is Isopentenyl-diphosphate Delta-isomerase from Agromyces mediolanus (Corynebacterium mediolanum).